The chain runs to 275 residues: Galaxin-2 (275 aa).

The signal sequence occupies residues methionine 1–cysteine 20.

Component of the acid-insoluble and acid-soluble organic matrix of the aragonitic skeleton (at protein level).

The protein localises to the secreted. This chain is Galaxin-2, found in Acropora millepora (Staghorn coral).